The sequence spans 84 residues: MERNYRKTRVGSVVSDKMDKTVVVAVEDRVRHPLLNKIIRHTRKFKAHDEKNECRIGDKVRIMETRPLSKEKRWRVVEIMERAR.

This sequence belongs to the universal ribosomal protein uS17 family. As to quaternary structure, part of the 30S ribosomal subunit.

In terms of biological role, one of the primary rRNA binding proteins, it binds specifically to the 5'-end of 16S ribosomal RNA. The sequence is that of Small ribosomal subunit protein uS17 from Moorella thermoacetica (strain ATCC 39073 / JCM 9320).